A 262-amino-acid chain; its full sequence is Type III pantothenate kinase (262 aa).

An ATP-binding site is contributed by 6 to 13; sequence DVGNTNTV. Substrate contacts are provided by residues tyrosine 101 and 108–111; that span reads GADR. The active-site Proton acceptor is the aspartate 110. Residue aspartate 130 participates in K(+) binding. An ATP-binding site is contributed by threonine 133. Residue threonine 186 coordinates substrate.

The protein belongs to the type III pantothenate kinase family. In terms of assembly, homodimer. It depends on NH4(+) as a cofactor. K(+) serves as cofactor.

The protein localises to the cytoplasm. It catalyses the reaction (R)-pantothenate + ATP = (R)-4'-phosphopantothenate + ADP + H(+). Its pathway is cofactor biosynthesis; coenzyme A biosynthesis; CoA from (R)-pantothenate: step 1/5. Catalyzes the phosphorylation of pantothenate (Pan), the first step in CoA biosynthesis. This chain is Type III pantothenate kinase, found in Desulforapulum autotrophicum (strain ATCC 43914 / DSM 3382 / VKM B-1955 / HRM2) (Desulfobacterium autotrophicum).